We begin with the raw amino-acid sequence, 1257 residues long: Liprin-alpha-2 (1257 aa).

A disordered region spans residues 1 to 29; that stretch reads MMCEVMPTINEDTPMSQRGSQSSGSDSDS. Low complexity predominate over residues 16 to 26; the sequence is SQRGSQSSGSD. Coiled-coil stretches lie at residues 29 to 154 and 185 to 235; these read SHFE…SLRM and KALD…SSEG. Ser-236 is subject to Phosphoserine. At Thr-237 the chain carries Phosphothreonine. Position 239 is a phosphoserine (Ser-239). Coiled coils occupy residues 264–541 and 643–695; these read TDDT…SLIE and HSDA…GLNL. A disordered region spans residues 439 to 463; sequence GQLEEKNQELQRARQREKMNEEHNK. A phosphoserine mark is found at Ser-687 and Ser-689. Positions 709–725 are enriched in low complexity; it reads TASSLASSSPPSGHSTP. 2 disordered regions span residues 709 to 738 and 759 to 834; these read TASS…EMDR and EEDG…KSSI. Over residues 787–802 the composition is skewed to polar residues; the sequence is TLPSSYHNDARSSLSA. Phosphoserine is present on residues Ser-817 and Ser-820. SAM domains are found at residues 898 to 964, 1020 to 1084, and 1108 to 1177; these read WDGP…MVSL, NHEW…LKRL, and WSND…LLAL. Residues 1081 to 1107 adopt a coiled-coil conformation; the sequence is LKRLNYDRKELERRREASQHEIKDVLV.

This sequence belongs to the liprin family. Liprin-alpha subfamily. Forms homodimers and heterodimers with liprins-alpha and liprins-beta. Interacts with the second PTPase domain of PTPRD, PTPRF and PTPRS. Interacts with KIF1A; the interaction decreases in presence of calcium.

The protein resides in the cytoplasm. Its subcellular location is the cell surface. It is found in the cell projection. The protein localises to the dendritic spine. Functionally, alters PTPRF cellular localization and induces PTPRF clustering. May regulate the disassembly of focal adhesions. May localize receptor-like tyrosine phosphatases type 2A at specific sites on the plasma membrane, possibly regulating their interaction with the extracellular environment and their association with substrates. In neuronal cells, is a scaffolding protein in the dendritic spines which acts as immobile postsynaptic post able to recruit KIF1A-driven dense core vesicles to dendritic spines. This is Liprin-alpha-2 (Ppfia2) from Mus musculus (Mouse).